The primary structure comprises 1366 residues: DNA-directed RNA polymerase subunit beta (1366 aa).

It belongs to the RNA polymerase beta chain family. As to quaternary structure, the RNAP catalytic core consists of 2 alpha, 1 beta, 1 beta' and 1 omega subunit. When a sigma factor is associated with the core the holoenzyme is formed, which can initiate transcription.

It catalyses the reaction RNA(n) + a ribonucleoside 5'-triphosphate = RNA(n+1) + diphosphate. In terms of biological role, DNA-dependent RNA polymerase catalyzes the transcription of DNA into RNA using the four ribonucleoside triphosphates as substrates. This chain is DNA-directed RNA polymerase subunit beta, found in Polynucleobacter necessarius subsp. necessarius (strain STIR1).